A 562-amino-acid polypeptide reads, in one-letter code: Formate--tetrahydrofolate ligase (562 aa).

Position 71–78 (71–78 (TPAGEGKS)) interacts with ATP.

This sequence belongs to the formate--tetrahydrofolate ligase family.

It carries out the reaction (6S)-5,6,7,8-tetrahydrofolate + formate + ATP = (6R)-10-formyltetrahydrofolate + ADP + phosphate. Its pathway is one-carbon metabolism; tetrahydrofolate interconversion. This is Formate--tetrahydrofolate ligase from Bacillus cereus (strain ATCC 10987 / NRS 248).